Consider the following 76-residue polypeptide: Conotoxin TsMLCL-03 (76 aa).

The first 19 residues, 1-19 (MLCLPVFIILLLLASPAAP), serve as a signal peptide directing secretion. The propeptide occupies 20 to 44 (NPLERRIQSDLIRTALEDADMKTPK).

This sequence belongs to the conotoxin T superfamily. Post-translationally, contains 2 disulfide bonds that can be either 'C1-C3, C2-C4' or 'C1-C4, C2-C3', since these disulfide connectivities have been observed for conotoxins with cysteine framework V (for examples, see AC P0DQQ7 and AC P81755). Expressed by the venom duct.

The protein localises to the secreted. This Conus tessulatus (Tessellate cone) protein is Conotoxin TsMLCL-03.